The sequence spans 406 residues: Olfactomedin-like protein 3 (406 aa).

The N-terminal stretch at 1–21 (MGPSTPLLILFLLSWSGPLQG) is a signal peptide. The stretch at 25–101 (HLVEYMERRL…REVDYLETQN (77 aa)) forms a coiled coil. One can recognise an Olfactomedin-like domain in the interval 134–401 (DCGYTISQVR…QIVYKLEMRK (268 aa)). The cysteines at positions 135 and 328 are disulfide-linked. 2 N-linked (GlcNAc...) asparagine glycosylation sites follow: N177 and N248.

This sequence belongs to the OLFML3 family. As to expression, abundant in placenta, moderate in liver and heart, whereas fairly weak in other tissues examined. On term placenta, mainly localized extracellularly surrounding the syncytiotrophoblastic cells and very rarely expressed in the maternal decidua layer.

Its subcellular location is the secreted. Secreted scaffold protein that plays an essential role in dorsoventral patterning during early development. Stabilizes axial formation by restricting chordin (CHRD) activity on the dorsal side. Acts by facilitating the association between the tolloid proteases and their substrate chordin (CHRD), leading to enhance chordin (CHRD) degradation. May have matrix-related function involved in placental and embryonic development, or play a similar role in other physiological processes. This chain is Olfactomedin-like protein 3 (OLFML3), found in Homo sapiens (Human).